Reading from the N-terminus, the 563-residue chain is DNA polymerase III subunit tau (563 aa).

An ATP-binding site is contributed by 45–52 (GPRGTGKT). The Zn(2+) site is built by Cys64, Cys73, Cys76, and Cys79.

Belongs to the DnaX/STICHEL family. As to quaternary structure, component of the DNA clamp loading complex consisting of tau(3):delta(1):delta'(1). The DNA polymerase III holoenzyme complex contains at least 10 different subunits organized into 3 functionally essential subassemblies: the Pol III core, the beta sliding clamp processivity factor and the clamp-loading complex. The Pol III core (subunits alpha, epsilon and theta) contains the polymerase and the 3'-5' exonuclease proofreading activities. The polymerase is tethered to the template via the dimeric beta sliding clamp processivity factor. The DNA clamp-loading complex assembles the beta sliding clamp onto the primed template and plays a central role in the organization and communication at the replication fork. Forms a complex with replicative DNA helicase DnaB (shown with G.stearothermophilus DnaB) tau(3):DnaB(6); a single ATP hydrolysis even is sufficient for complex formation. Colocalizes with DNA helicases PriA, RecQ and RecS.

Its subcellular location is the cytoplasm. The protein localises to the nucleoid. It carries out the reaction DNA(n) + a 2'-deoxyribonucleoside 5'-triphosphate = DNA(n+1) + diphosphate. Part of the beta sliding clamp loading complex, which hydrolyzes ATP to load the beta clamp onto primed DNA to form the DNA replication pre-initiation complex. DNA polymerase III is a complex, multichain enzyme responsible for most of the replicative DNA synthesis in bacteria. The protein is DNA polymerase III subunit tau of Bacillus subtilis (strain 168).